A 53-amino-acid polypeptide reads, in one-letter code: ATP synthase protein 8 (53 aa).

The chain crosses the membrane as a helical span at residues 4–24; the sequence is MAPISWLLLFIIFSITFILFC.

Belongs to the ATPase protein 8 family. F-type ATPases have 2 components, CF(1) - the catalytic core - and CF(0) - the membrane proton channel.

Its subcellular location is the mitochondrion membrane. Functionally, mitochondrial membrane ATP synthase (F(1)F(0) ATP synthase or Complex V) produces ATP from ADP in the presence of a proton gradient across the membrane which is generated by electron transport complexes of the respiratory chain. F-type ATPases consist of two structural domains, F(1) - containing the extramembraneous catalytic core and F(0) - containing the membrane proton channel, linked together by a central stalk and a peripheral stalk. During catalysis, ATP synthesis in the catalytic domain of F(1) is coupled via a rotary mechanism of the central stalk subunits to proton translocation. Part of the complex F(0) domain. Minor subunit located with subunit a in the membrane. In Drosophila sechellia (Fruit fly), this protein is ATP synthase protein 8 (mt:ATPase8).